A 468-amino-acid chain; its full sequence is MAKQQIGVIGMAVMGRNLALNMERNQYTVSIFNRSLDITEKIILNNPNKNLFPFFSIKDFVLSLIVPRCIVLMIKSGVATDDTIKSLIPYLSKGDIIIDGGNTFYKDTIQRGYELLKIGVNLIGAGFSGGEKGALYGPSIMPGGRQEAYNYVSPILKKIASNSEGIPCVTYIGPDGSGHYVKMVHNGIEYGDMQLIAESYFILKTLLRLDNQSISKIFDIWNQGELNSYLIDITKDILIKKDDQNNYLIDCILDEGSSKGTGTWTTKSALDLNEPLTLITESVFFRYLSSLKSQRLLASKILCGPKDFFIVLNRDDFIEKIRQALYLGKIISYAQGFSQLNSASQKYNWNLKLGEISRIFQSGCIIRAKLLKNITQEYSSNNNFVNLLLTPYFREIANTYHSSLREIVSISVKYGIPIPALSSAISYFDSYRSAFLPSNLIQAQRDFFGAHTYKRIDKSGIFHTNWYS.

Residues 10–15 (GMAVMG), 33–35 (NRS), 74–76 (IKS), and Asn-102 each bind NADP(+). Substrate-binding positions include Asn-102 and 128–130 (SGG). The active-site Proton acceptor is Lys-182. 185–186 (HN) is a binding site for substrate. Glu-189 serves as the catalytic Proton donor. Residues Tyr-190, Lys-259, Arg-286, Arg-445, and His-451 each coordinate substrate.

This sequence belongs to the 6-phosphogluconate dehydrogenase family. As to quaternary structure, homodimer.

The catalysed reaction is 6-phospho-D-gluconate + NADP(+) = D-ribulose 5-phosphate + CO2 + NADPH. The protein operates within carbohydrate degradation; pentose phosphate pathway; D-ribulose 5-phosphate from D-glucose 6-phosphate (oxidative stage): step 3/3. Functionally, catalyzes the oxidative decarboxylation of 6-phosphogluconate to ribulose 5-phosphate and CO(2), with concomitant reduction of NADP to NADPH. In Buchnera aphidicola subsp. Baizongia pistaciae (strain Bp), this protein is 6-phosphogluconate dehydrogenase, decarboxylating (gnd).